Here is a 620-residue protein sequence, read N- to C-terminus: Protein CNGC15b (620 aa).

Transmembrane regions (helical) follow at residues 73-93 (IFLVACLISLFVDPLFFYLPI), 102-122 (IGIAVEVFLIIIRSIADVFYV), 161-181 (GFFLDFIAALPLPQVLIWIVI), 198-218 (FIIIIQYLPRLFLIFPLSSQI), 237-257 (LMLYMLASHVLGACWYLLSIE), and 356-376 (GEIMFAIVIATLGLVLFALLI). Residue 462 to 559 (LFDAMDERML…SSTRTVKAIS (98 aa)) coordinates a nucleoside 3',5'-cyclic phosphate.

It belongs to the cyclic nucleotide-gated cation channel (TC 1.A.1.5) family. As to quaternary structure, interacts (via N-terminus) with DMI1 (via c-terminus). The Nod factor has no effect on this interaction, implying that the complex is maintained after activation. Expressed in roots, stems, leaves, flowers and pods.

It localises to the nucleus membrane. In terms of biological role, cyclic nucleotide-gated channel involved in the establishment of both rhizobial and mycorrhizal associations. Required for full activation of nuclear-localized Ca(2+) oscillations by Nod and Myc factors. Simultaneous activation of the K(+)-permeable channel DMI1 and the Ca(2+) channel CNGC15 can give rise to sustained Ca(2+) oscillations. May function during fertilization in both female and male gametophytic Ca(2+) signaling. This is Protein CNGC15b from Medicago truncatula (Barrel medic).